Reading from the N-terminus, the 88-residue chain is Small ribosomal subunit protein uS17 (88 aa).

The protein belongs to the universal ribosomal protein uS17 family. Part of the 30S ribosomal subunit.

One of the primary rRNA binding proteins, it binds specifically to the 5'-end of 16S ribosomal RNA. The protein is Small ribosomal subunit protein uS17 of Mycoplasmopsis pulmonis (strain UAB CTIP) (Mycoplasma pulmonis).